Here is a 357-residue protein sequence, read N- to C-terminus: Acyl-coenzyme A diphosphatase NUDT19 (357 aa).

Positions 10-242 (AATVMLAAGW…IWLAPPQFYE (233 aa)) constitute a Nudix hydrolase domain. Positions 97–118 (AALPDDVALRICAIRETFEEAG) match the Nudix box motif. Glutamate 112 and glutamate 116 together coordinate Mg(2+). Lysine 300 is modified (N6-succinyllysine). Residues 355-357 (ARL) carry the Microbody targeting signal motif.

Belongs to the Nudix hydrolase family. Monomer. Requires Mg(2+) as cofactor. The cofactor is Mn(2+).

It is found in the peroxisome. The catalysed reaction is an acyl-CoA + H2O = an acyl-4'-phosphopantetheine + adenosine 3',5'-bisphosphate + 2 H(+). The enzyme catalyses CoA + H2O = (R)-4'-phosphopantetheine + adenosine 3',5'-bisphosphate + 2 H(+). It carries out the reaction hexanoyl-CoA + H2O = hexanoyl-4'-phosphopantetheine + adenosine 3',5'-bisphosphate + 2 H(+). It catalyses the reaction octanoyl-CoA + H2O = S-octanoyl-4'-phosphopantetheine + adenosine 3',5'-bisphosphate + 2 H(+). The catalysed reaction is butanoyl-CoA + H2O = S-butanoyl-4'-phosphopantetheine + adenosine 3',5'-bisphosphate + 2 H(+). The enzyme catalyses propanoyl-CoA + H2O = propanoyl-4'-phosphopantetheine + adenosine 3',5'-bisphosphate + 2 H(+). It carries out the reaction malonyl-CoA + H2O = malonyl-4'-phosphopantetheine + adenosine 3',5'-bisphosphate + 2 H(+). It catalyses the reaction succinyl-CoA + H2O = succinyl-4'-phosphopantetheine + adenosine 3',5'-bisphosphate + 2 H(+). The catalysed reaction is choloyl-CoA + H2O = S-choloyl-4'-phosphopantetheine + adenosine 3',5'-bisphosphate + 2 H(+). The enzyme catalyses 4,8-dimethylnonanoyl-CoA + H2O = S-(4,8-dimethylnonanoyl)-4'-phosphopantetheine + adenosine 3',5'-bisphosphate + 2 H(+). It carries out the reaction (9Z,12Z,15Z)-octadecatrienoyl-CoA + H2O = S-(9Z,12Z,15Z-octadecatrienoyl)-4'-phosphopantetheine + adenosine 3',5'-bisphosphate + 2 H(+). It catalyses the reaction (9Z,12Z)-octadecadienoyl-CoA + H2O = S-(9Z,12Z-octadecadienoyl)-4'-phosphopantetheine + adenosine 3',5'-bisphosphate + 2 H(+). The catalysed reaction is (9Z)-hexadecenoyl-CoA + H2O = S-(9Z-hexadecenoyl)-4'-phosphopantetheine + adenosine 3',5'-bisphosphate + 2 H(+). The enzyme catalyses (9Z)-tetradecenoyl-CoA + H2O = S-(9Z-tetradecenoyl)-4'-phosphopantetheine + adenosine 3',5'-bisphosphate + 2 H(+). It carries out the reaction (6Z)-octenoyl-CoA + H2O = S-(6Z-octenoyl)-4'-phosphopantetheine + adenosine 3',5'-bisphosphate + 2 H(+). It catalyses the reaction hexadecanoyl-CoA + H2O = S-hexadecanoyl-4'-phosphopantetheine + adenosine 3',5'-bisphosphate + 2 H(+). The catalysed reaction is tetradecanoyl-CoA + H2O = tetradecanoyl-4'-phosphopantetheine + adenosine 3',5'-bisphosphate + 2 H(+). The enzyme catalyses dodecanoyl-CoA + H2O = S-dodecanoyl-4'-phosphopantetheine + adenosine 3',5'-bisphosphate + 2 H(+). It carries out the reaction a 5'-end CoA-ribonucleoside in mRNA + H2O = a 5'-end phospho-adenosine-phospho-ribonucleoside in mRNA + (R)-4'-phosphopantetheine + 2 H(+). Functionally, fatty acyl-coenzyme A (CoA) diphosphatase that hydrolyzes fatty acyl-CoA to yield acyl-4'-phosphopantetheine and adenosine 3',5'-bisphosphate. Mediates the hydrolysis of a wide range of CoA esters, including choloyl-CoA and branched-chain fatty-acyl-CoA esters and at low substrate concentrations medium and long-chain fatty-acyl-CoA esters are the primary substrates. Highest activity seen with medium-chain acyl-CoA esters and higher rates of activity seen with the unsaturated acyl-CoA esters compared with the saturated esters. Exhibits decapping activity towards dpCoA-capped RNAs in vitro. This Rattus norvegicus (Rat) protein is Acyl-coenzyme A diphosphatase NUDT19 (Nudt19).